A 105-amino-acid polypeptide reads, in one-letter code: Prothymosin alpha-A (105 aa).

A compositionally biased stretch (basic and acidic residues) spans 1–30 (MADTKVDTSKEVSAKDLKEKKQVEEAENGK). Positions 1 to 105 (MADTKVDTSK…VDPKKQKTDV (105 aa)) are disordered. Composition is skewed to acidic residues over residues 39–78 (ENEENGDQENEVDEEDDDVAEEDEEDDGEGDDDDEDEEAE) and 87–96 (EDDDDDEDDV).

Belongs to the pro/parathymosin family. In terms of tissue distribution, at the 20-somite stage (18 hpf), expressed on the dorsal side of the embryo in the developing central and peripheral nervous system (CNS and PNS), in the tail bud and the pronephric ducts. In the PNS, expressed in the otic vesicle, trigeminal ganglion and the anterior lateral line placode. Localized throughout the hindbrain, with highest expression in rhombomeres 3 and 4. In the head, expressed in the olfactory placode and in the diencephalic region. At the end of the segmentation period (20 hpf), expression begins in the newly forming endodermal pouches, and weakly in the pharyngeal arch precursor cells. During the early pharyngula period, expressed in the pectoral fin bud, the developing retina, and still present in the central nervous system and endodermal pouches. In the tail, expressed in the spinal cord and posterior lateral line precursors. Weakly expressed in the pronephric ducts, only in the corpuscles of Stanius. At 48 hpf, still expressed in the retina and brain, where expression is almost uniform. At this stage, expression is decreased in the spinal cord and is absent from the lateral line cells and pronephric ducts, but appears in the intestine and continues in the pharyngeal arches. In 72 hpf embryos, expression in the brain remains uniform but is restricted to amacrine cells in the retina. In the pharyngeal arches, expression continues to be limited to the ectodermal and endodermal covering cells.

It is found in the nucleus. This chain is Prothymosin alpha-A (ptmaa), found in Danio rerio (Zebrafish).